A 273-amino-acid chain; its full sequence is Light-independent protochlorophyllide reductase iron-sulfur ATP-binding protein (273 aa).

ATP contacts are provided by residues 12–17 (GIGKST) and Lys41. Ser16 is a Mg(2+) binding site. Residues Cys97 and Cys131 each coordinate [4Fe-4S] cluster. 182–183 (NR) is an ATP binding site.

It belongs to the NifH/BchL/ChlL family. As to quaternary structure, homodimer. Protochlorophyllide reductase is composed of three subunits; BchL, BchN and BchB. The cofactor is [4Fe-4S] cluster.

The catalysed reaction is chlorophyllide a + oxidized 2[4Fe-4S]-[ferredoxin] + 2 ADP + 2 phosphate = protochlorophyllide a + reduced 2[4Fe-4S]-[ferredoxin] + 2 ATP + 2 H2O. Its pathway is porphyrin-containing compound metabolism; bacteriochlorophyll biosynthesis (light-independent). Component of the dark-operative protochlorophyllide reductase (DPOR) that uses Mg-ATP and reduced ferredoxin to reduce ring D of protochlorophyllide (Pchlide) to form chlorophyllide a (Chlide). This reaction is light-independent. The L component serves as a unique electron donor to the NB-component of the complex, and binds Mg-ATP. This Chloroflexus aggregans (strain MD-66 / DSM 9485) protein is Light-independent protochlorophyllide reductase iron-sulfur ATP-binding protein.